The chain runs to 726 residues: Catalase-peroxidase (726 aa).

Residues 1 to 13 are compositionally biased toward polar residues; the sequence is MSMSEETNNSLSS. The interval 1 to 34 is disordered; the sequence is MSMSEETNNSLSSGKCPFHHGGSDQSAGEGTGSR. The segment at residues 105 to 226 is a cross-link (tryptophyl-tyrosyl-methioninium (Trp-Tyr) (with M-252)); sequence WHGAGTYRSV…LAATEMGLIY (122 aa). Catalysis depends on histidine 106, which acts as the Proton acceptor. The tryptophyl-tyrosyl-methioninium (Tyr-Met) (with W-105) cross-link spans 226 to 252; sequence YVNPEGPNASGEPLSAAAAIRATFGNM. Histidine 267 contacts heme b.

It belongs to the peroxidase family. Peroxidase/catalase subfamily. Homodimer or homotetramer. Requires heme b as cofactor. Formation of the three residue Trp-Tyr-Met cross-link is important for the catalase, but not the peroxidase activity of the enzyme.

It catalyses the reaction H2O2 + AH2 = A + 2 H2O. The enzyme catalyses 2 H2O2 = O2 + 2 H2O. Bifunctional enzyme with both catalase and broad-spectrum peroxidase activity. The sequence is that of Catalase-peroxidase from Enterobacter sp. (strain 638).